The sequence spans 308 residues: Methionyl-tRNA formyltransferase (308 aa).

109 to 112 (SLLP) serves as a coordination point for (6S)-5,6,7,8-tetrahydrofolate.

This sequence belongs to the Fmt family.

It catalyses the reaction L-methionyl-tRNA(fMet) + (6R)-10-formyltetrahydrofolate = N-formyl-L-methionyl-tRNA(fMet) + (6S)-5,6,7,8-tetrahydrofolate + H(+). In terms of biological role, attaches a formyl group to the free amino group of methionyl-tRNA(fMet). The formyl group appears to play a dual role in the initiator identity of N-formylmethionyl-tRNA by promoting its recognition by IF2 and preventing the misappropriation of this tRNA by the elongation apparatus. The sequence is that of Methionyl-tRNA formyltransferase from Caulobacter vibrioides (strain NA1000 / CB15N) (Caulobacter crescentus).